A 123-amino-acid polypeptide reads, in one-letter code: NADH-quinone oxidoreductase subunit A (123 aa).

3 helical membrane-spanning segments follow: residues 6–26 (LTPY…AMLI), 66–86 (VVAL…PWAV), and 93–113 (WFGY…LIYI).

The protein belongs to the complex I subunit 3 family. NDH-1 is composed of 14 different subunits. Subunits NuoA, H, J, K, L, M, N constitute the membrane sector of the complex.

The protein resides in the cell inner membrane. The catalysed reaction is a quinone + NADH + 5 H(+)(in) = a quinol + NAD(+) + 4 H(+)(out). Functionally, NDH-1 shuttles electrons from NADH, via FMN and iron-sulfur (Fe-S) centers, to quinones in the respiratory chain. The immediate electron acceptor for the enzyme in this species is believed to be ubiquinone. Couples the redox reaction to proton translocation (for every two electrons transferred, four hydrogen ions are translocated across the cytoplasmic membrane), and thus conserves the redox energy in a proton gradient. This Myxococcus xanthus (strain DK1622) protein is NADH-quinone oxidoreductase subunit A.